Here is a 142-residue protein sequence, read N- to C-terminus: Large ribosomal subunit protein uL13 (142 aa).

The protein belongs to the universal ribosomal protein uL13 family. Part of the 50S ribosomal subunit.

This protein is one of the early assembly proteins of the 50S ribosomal subunit, although it is not seen to bind rRNA by itself. It is important during the early stages of 50S assembly. The chain is Large ribosomal subunit protein uL13 from Methanosphaera stadtmanae (strain ATCC 43021 / DSM 3091 / JCM 11832 / MCB-3).